The following is a 716-amino-acid chain: Protein C-mannosyl-transferase DPY19L3 (716 aa).

Topologically, residues methionine 1–lysine 43 are cytoplasmic. A helical membrane pass occupies residues isoleucine 44 to tyrosine 64. The Lumenal portion of the chain corresponds to leucine 65–glutamate 154. Asparagine 118 is a glycosylation site (N-linked (GlcNAc...) asparagine). The chain crosses the membrane as a helical span at residues proline 155 to serine 182. The Cytoplasmic segment spans residues glycine 183–threonine 184. Positions tryptophan 185–threonine 197 form an intramembrane region, name=3. At asparagine 198 to tryptophan 215 the chain is on the cytoplasmic side. Residues alanine 216 to phenylalanine 230 constitute an intramembrane region (name=4). Over leucine 231–serine 239 the chain is Cytoplasmic. Residues glutamate 240–leucine 256 form a helical membrane-spanning segment. Topologically, residues threonine 257–glutamine 262 are lumenal. The chain crosses the membrane as a helical span at residues phenylalanine 263–aspartate 279. Topologically, residues methionine 280–leucine 289 are cytoplasmic. Residues tyrosine 290–phenylalanine 306 traverse the membrane as a helical segment. Residues asparagine 307–serine 308 lie on the Lumenal side of the membrane. Residues methionine 309 to phenylalanine 323 form a helical membrane-spanning segment. Residues isoleucine 324–leucine 338 lie on the Cytoplasmic side of the membrane. Residues asparagine 339–asparagine 359 traverse the membrane as a helical segment. Over asparagine 360–aspartate 414 the chain is Lumenal. A helical transmembrane segment spans residues threonine 415–phenylalanine 437. Topologically, residues histidine 438–tyrosine 465 are cytoplasmic. Residues asparagine 466–tyrosine 485 traverse the membrane as a helical segment. Residues leucine 486 to tryptophan 487 are Lumenal-facing. The helical transmembrane segment at threonine 488 to leucine 499 threads the bilayer. Residues cysteine 500–isoleucine 522 are Cytoplasmic-facing. The chain crosses the membrane as a helical span at residues methionine 523–phenylalanine 539. Residues tryptophan 540–lysine 716 lie on the Lumenal side of the membrane. A glycan (N-linked (GlcNAc...) asparagine) is linked at asparagine 704.

It belongs to the dpy-19 family.

The protein resides in the endoplasmic reticulum membrane. The enzyme catalyses L-tryptophyl-[protein] + a di-trans,poly-cis-dolichyl beta-D-mannosyl phosphate = C-alpha-D-mannosyl-L-tryptophyl-[protein] + a di-trans,poly-cis-dolichyl phosphate + H(+). It functions in the pathway protein modification; protein glycosylation. C-mannosyltransferase that mediates C-mannosylation of tryptophan residues on target proteins. The reaction occurs on the luminal side of the endoplasmic reticulum and involves the transfer of a mannose unit from a dolichylphosphate mannose (Dol-P-Man) donor to an acceptor protein containing a WxxW or WxxC consensus sequence. C-mannosylates RSPO1, a Wnt signaling regulator, preferentially at the first Trp residue in the sequence WxxW. C-mannosylates the netrin receptor UNC5A, preferentially at the third tryptophan of WxxWxxWxxC sequence. The protein is Protein C-mannosyl-transferase DPY19L3 (DPY19L3) of Pongo abelii (Sumatran orangutan).